The primary structure comprises 267 residues: Tryptophan synthase alpha chain (267 aa).

Active-site proton acceptor residues include E49 and D60.

This sequence belongs to the TrpA family. As to quaternary structure, tetramer of two alpha and two beta chains.

The enzyme catalyses (1S,2R)-1-C-(indol-3-yl)glycerol 3-phosphate + L-serine = D-glyceraldehyde 3-phosphate + L-tryptophan + H2O. It functions in the pathway amino-acid biosynthesis; L-tryptophan biosynthesis; L-tryptophan from chorismate: step 5/5. Functionally, the alpha subunit is responsible for the aldol cleavage of indoleglycerol phosphate to indole and glyceraldehyde 3-phosphate. This is Tryptophan synthase alpha chain from Carboxydothermus hydrogenoformans (strain ATCC BAA-161 / DSM 6008 / Z-2901).